The sequence spans 117 residues: MRSNNSSLVHCCWVSPPSLTRLPAFPSPRILSPCYCYNKRIRPFRGLTSYRQASYSLGFPLGLLVFLHSLIVARFFVASKSRSCIVRSLLFWINLDSADSRISVLFQCFFCIDIWTV.

Residues 57-77 (LGFPLGLLVFLHSLIVARFFV) traverse the membrane as a helical segment.

The protein resides in the membrane. This is an uncharacterized protein from Schizosaccharomyces pombe (strain 972 / ATCC 24843) (Fission yeast).